A 635-amino-acid chain; its full sequence is Biosynthetic arginine decarboxylase (635 aa).

The residue at position 103 (K103) is an N6-(pyridoxal phosphate)lysine. 283–293 (FDVGGGLGVDY) contacts substrate.

The protein belongs to the Orn/Lys/Arg decarboxylase class-II family. SpeA subfamily. It depends on Mg(2+) as a cofactor. The cofactor is pyridoxal 5'-phosphate.

It catalyses the reaction L-arginine + H(+) = agmatine + CO2. It functions in the pathway amine and polyamine biosynthesis; agmatine biosynthesis; agmatine from L-arginine: step 1/1. In terms of biological role, catalyzes the biosynthesis of agmatine from arginine. The chain is Biosynthetic arginine decarboxylase from Proteus mirabilis (strain HI4320).